The chain runs to 149 residues: Large ribosomal subunit protein uL15C (149 aa).

Residues 21–40 (RIGKHRKQRGGRGNAGGQHH) form a disordered region.

This sequence belongs to the universal ribosomal protein uL15 family. As to quaternary structure, component of the large ribosomal subunit.

The protein resides in the cytoplasm. It localises to the cytosol. Its subcellular location is the endoplasmic reticulum. Functionally, component of the large ribosomal subunit. The ribosome is a large ribonucleoprotein complex responsible for the synthesis of proteins in the cell. This Entamoeba histolytica (strain ATCC 30459 / HM-1:IMSS / ABRM) protein is Large ribosomal subunit protein uL15C (rpl27a-3).